A 258-amino-acid polypeptide reads, in one-letter code: Protein UL24 homolog (258 aa).

Belongs to the herpesviridae UL24 family.

The protein localises to the virion. It localises to the host cytoplasm. It is found in the host nucleus. Its subcellular location is the host nucleolus. The protein resides in the host Golgi apparatus. In terms of biological role, may participate in nuclear egress of viral particles. Plays a role in the dispersal of several host nucleolar proteins including NCL/nucleolin and NPM1. Since deletion of host NCL/nucleolin negatively impact on nuclear egress, UL24 supposedly acts on this process through its effect on host nucleoli. The chain is Protein UL24 homolog from Varicella-zoster virus (strain Dumas) (HHV-3).